We begin with the raw amino-acid sequence, 438 residues long: Tyrosine--tRNA ligase (438 aa).

Y47 lines the L-tyrosine pocket. The short motif at 52–61 (PTATSLHVGG) is the 'HIGH' region element. L-tyrosine is bound by residues Y183 and Q187. Positions 243-247 (KMGKT) match the 'KMSKS' region motif. Residue K246 participates in ATP binding. One can recognise an S4 RNA-binding domain in the interval 370-436 (LWIVEALQTA…GKRKYALLKI (67 aa)).

Belongs to the class-I aminoacyl-tRNA synthetase family. TyrS type 1 subfamily. As to quaternary structure, homodimer.

Its subcellular location is the cytoplasm. It catalyses the reaction tRNA(Tyr) + L-tyrosine + ATP = L-tyrosyl-tRNA(Tyr) + AMP + diphosphate + H(+). Its function is as follows. Catalyzes the attachment of tyrosine to tRNA(Tyr) in a two-step reaction: tyrosine is first activated by ATP to form Tyr-AMP and then transferred to the acceptor end of tRNA(Tyr). The sequence is that of Tyrosine--tRNA ligase from Rhodopirellula baltica (strain DSM 10527 / NCIMB 13988 / SH1).